Consider the following 340-residue polypeptide: Deubiquitinase SseL (340 aa).

Residue histidine 223 is part of the active site. Cysteine 285 serves as the catalytic Nucleophile.

It belongs to the peptidase C79 family.

The protein localises to the secreted. The protein resides in the host cytoplasm. Functionally, effector proteins function to alter host cell physiology and promote bacterial survival in host tissues. This protease targets the host cell ubiquitin pathway by acting as a deubiquitinase in infected host cells. The protein is Deubiquitinase SseL (sseL) of Salmonella choleraesuis (strain SC-B67).